The chain runs to 297 residues: MLSKQVRLLVITGLSGAGKTQALQSLEDQGYFCVDNLPPSLILKFAELCTQSQGKVTRAAIVCDLRGGEFFSSLAEALGDLHREGFHYEILFLEASDEVLVGRYKESRRRHPLSPSGGILEGIQMERQMLTELRGVAHKIMDTSNLSSQQLRHQVAESFGNEQASGHLAVSVVSFGFKYAIPLDVDLLIDVRFLPNPFYVAELRPLTGEHPQVQDYIFSNPVAQEFVDKYLGLLEFILPYYVKEGKRHLVIGVGCTGGQHRSVAIAERIGLFLQERSYMMSVKHRDAARNRKGDKSK.

Residue 13–20 coordinates ATP; the sequence is GLSGAGKT. 64–67 lines the GTP pocket; that stretch reads DLRG.

Belongs to the RapZ-like family.

In terms of biological role, displays ATPase and GTPase activities. This Desulfitobacterium hafniense (strain Y51) protein is Nucleotide-binding protein DSY4845.